Reading from the N-terminus, the 253-residue chain is Tryptophan synthase alpha chain (253 aa).

Active-site proton acceptor residues include Glu-48 and Asp-59.

This sequence belongs to the TrpA family. Tetramer of two alpha and two beta chains.

It carries out the reaction (1S,2R)-1-C-(indol-3-yl)glycerol 3-phosphate + L-serine = D-glyceraldehyde 3-phosphate + L-tryptophan + H2O. The protein operates within amino-acid biosynthesis; L-tryptophan biosynthesis; L-tryptophan from chorismate: step 5/5. In terms of biological role, the alpha subunit is responsible for the aldol cleavage of indoleglycerol phosphate to indole and glyceraldehyde 3-phosphate. The chain is Tryptophan synthase alpha chain from Caldicellulosiruptor saccharolyticus (strain ATCC 43494 / DSM 8903 / Tp8T 6331).